Here is a 495-residue protein sequence, read N- to C-terminus: Cobyric acid synthase (495 aa).

Residues 253–446 (KISIAIVYFP…FHGIFDGSAF (194 aa)) enclose the GATase cobBQ-type domain. The Nucleophile role is filled by cysteine 334. The active site involves histidine 438.

Belongs to the CobB/CobQ family. CobQ subfamily.

It functions in the pathway cofactor biosynthesis; adenosylcobalamin biosynthesis. Catalyzes amidations at positions B, D, E, and G on adenosylcobyrinic A,C-diamide. NH(2) groups are provided by glutamine, and one molecule of ATP is hydrogenolyzed for each amidation. The chain is Cobyric acid synthase from Chlorobium phaeobacteroides (strain BS1).